A 243-amino-acid polypeptide reads, in one-letter code: Ribonuclease 3 (243 aa).

Residues 10–146 (VNRFRKRFDT…FIGALYLDQG (137 aa)) form the RNase III domain. Residue E59 coordinates Mg(2+). D63 is a catalytic residue. Residues D132 and E135 each coordinate Mg(2+). E135 is an active-site residue. Positions 172–241 (DFKTQFQEYV…AESAYKQLKQ (70 aa)) constitute a DRBM domain. Over residues 219-231 (GKGKTKKESEQRA) the composition is skewed to basic and acidic residues. A disordered region spans residues 219 to 243 (GKGKTKKESEQRAAESAYKQLKQIK).

This sequence belongs to the ribonuclease III family. As to quaternary structure, homodimer. It depends on Mg(2+) as a cofactor.

The protein localises to the cytoplasm. It catalyses the reaction Endonucleolytic cleavage to 5'-phosphomonoester.. Digests double-stranded RNA. Involved in the processing of primary rRNA transcript to yield the immediate precursors to the large and small rRNAs (23S and 16S). Processes some mRNAs, and tRNAs when they are encoded in the rRNA operon. Processes pre-crRNA and tracrRNA of type II CRISPR loci if present in the organism. The polypeptide is Ribonuclease 3 (Staphylococcus aureus (strain USA300)).